We begin with the raw amino-acid sequence, 142 residues long: Small ribosomal subunit protein bS18c (142 aa).

The disordered stretch occupies residues 1–21; it reads MDRITGPFRKSKKSFRKPLPP.

It belongs to the bacterial ribosomal protein bS18 family. As to quaternary structure, part of the 30S ribosomal subunit.

The protein resides in the plastid. This chain is Small ribosomal subunit protein bS18c, found in Cuscuta gronovii (Common dodder).